A 472-amino-acid polypeptide reads, in one-letter code: UDP-N-acetylmuramate--L-alanine ligase (472 aa).

123 to 129 (GSHGKTT) contacts ATP.

This sequence belongs to the MurCDEF family.

Its subcellular location is the cytoplasm. It carries out the reaction UDP-N-acetyl-alpha-D-muramate + L-alanine + ATP = UDP-N-acetyl-alpha-D-muramoyl-L-alanine + ADP + phosphate + H(+). Its pathway is cell wall biogenesis; peptidoglycan biosynthesis. Cell wall formation. This Solibacter usitatus (strain Ellin6076) protein is UDP-N-acetylmuramate--L-alanine ligase.